The sequence spans 119 residues: Large ribosomal subunit protein bL17 (119 aa).

Belongs to the bacterial ribosomal protein bL17 family. In terms of assembly, part of the 50S ribosomal subunit. Contacts protein L32.

This Ureaplasma parvum serovar 3 (strain ATCC 27815 / 27 / NCTC 11736) protein is Large ribosomal subunit protein bL17.